A 689-amino-acid chain; its full sequence is MQNIDLISEEEAQKLLEELADKIAAYNHAYYIEDNPLVSDSEYDQLFNTNLKLEQKFPHLILENSPSKKVGAKIANKFAKVTHQVPMLSLSNAFDEQDVRDFVDRIKIFLRLNEFAPIFCEPKIDGLSFSAVYKHGVLTTGATRGDGYVGEDITANIKTIKNFPHKIDNVPEFLEVRGEIYIEKQDFLNLNKEQEEQGKDKFANPRNAAAGSLRQLDSSITAKRPLKYFVYSGGVTEQNLASSQDQLLTKLKECGFNINEISKLASSEEEIFAFYEYLKTNRENLPYEIDGVVYKLNDFALQNRMGFIARSPRFATAHKFPAIIGQTKLLSITVQVGRTGTLTPVAELEPIEIGGVTVSRATLHNFQEIARKDLRIKDYVFLQRAGDVIPKIMGVDFDKRPNDTETFDTPLFCLSCNSKLHYTPEDIIIRCDNGLNCPAQNYERIRHFVSKNAMDIEGLGRKQVEFLIDKGLISNLLDIFFLKEKNDSSLAKLENMDGWGKKSVENLFKNIEKSKNVSLPRFIYALGIRHIGEQNAKLLAREFGSYNNFIAQMELLRTNEPDIYQKLKNLEGIGDKILVDIIDFFDVKENIELIKKLGEILNIEDYKETREQSGLTDKIVVFTGSLPTISRAEAKATAEKLGAKVAVGVSSNTDLVVAGVDAGSKLKKAKELNIKIIDEEEWLTLIKNV.

Residues 40–44 (DSEYD), 89–90 (SL), and Glu121 contribute to the NAD(+) site. The active-site N6-AMP-lysine intermediate is Lys123. NAD(+)-binding residues include Arg144, Glu179, Lys295, and Lys319. Zn(2+) contacts are provided by Cys413, Cys416, Cys431, and Cys437. The BRCT domain occupies 610–689 (REQSGLTDKI…EEWLTLIKNV (80 aa)).

It belongs to the NAD-dependent DNA ligase family. LigA subfamily. Mg(2+) is required as a cofactor. It depends on Mn(2+) as a cofactor.

The catalysed reaction is NAD(+) + (deoxyribonucleotide)n-3'-hydroxyl + 5'-phospho-(deoxyribonucleotide)m = (deoxyribonucleotide)n+m + AMP + beta-nicotinamide D-nucleotide.. Functionally, DNA ligase that catalyzes the formation of phosphodiester linkages between 5'-phosphoryl and 3'-hydroxyl groups in double-stranded DNA using NAD as a coenzyme and as the energy source for the reaction. It is essential for DNA replication and repair of damaged DNA. The sequence is that of DNA ligase from Rickettsia conorii (strain ATCC VR-613 / Malish 7).